The following is a 261-amino-acid chain: Proteasome subunit alpha type-4 (261 aa).

A phosphoserine mark is found at Ser13 and Ser75. Lys127 bears the N6-acetyllysine mark. Ser173 bears the Phosphoserine mark. The residue at position 176 (Lys176) is an N6-acetyllysine. The interval 240–261 (HEEEEAKAEREKKEKEQKEKDK) is disordered.

The protein belongs to the peptidase T1A family. The 26S proteasome consists of a 20S proteasome core and two 19S regulatory subunits. The 20S proteasome core is a barrel-shaped complex made of 28 subunits that are arranged in four stacked rings. The two outer rings are each formed by seven alpha subunits, and the two inner rings are formed by seven beta subunits. The proteolytic activity is exerted by three beta-subunits PSMB5, PSMB6 and PSMB7.

Its subcellular location is the cytoplasm. The protein localises to the nucleus. Component of the 20S core proteasome complex involved in the proteolytic degradation of most intracellular proteins. This complex plays numerous essential roles within the cell by associating with different regulatory particles. Associated with two 19S regulatory particles, forms the 26S proteasome and thus participates in the ATP-dependent degradation of ubiquitinated proteins. The 26S proteasome plays a key role in the maintenance of protein homeostasis by removing misfolded or damaged proteins that could impair cellular functions, and by removing proteins whose functions are no longer required. Associated with the PA200 or PA28, the 20S proteasome mediates ubiquitin-independent protein degradation. This type of proteolysis is required in several pathways including spermatogenesis (20S-PA200 complex) or generation of a subset of MHC class I-presented antigenic peptides (20S-PA28 complex). The protein is Proteasome subunit alpha type-4 (PSMA4) of Macaca fascicularis (Crab-eating macaque).